The chain runs to 353 residues: MAFWIASSPHNHNHTKTPNLMRLVIYATLPGVLAQWYFFGWGNLIHIGLAMTTAIICEFTVLSLRKKPISHELFDGSALLTALLLGICLPALAPWWITVIGTMFAIVIVKQLYGGLGHNPFNPAMAGYVMLLVSFPLQMTLWQPPLTLVAVDLNFTNTLTTILTGFTVEGYSVEQVRTSIDGITMATPLDTLKTNTGLGLTVLESIKNPIFGENLALGWEWVNAGFLLGGLFLISRKAIAWQTPISFLLSLFICSFIGYSISPDSSASTMFHWFSGATMLGAFFILTDPVTGATSNKGRIIVGLLAGLLVYLIRTSGGYPDGVAFAILLCNMSAPLIDQYTRPRTYGHLKGDK.

The next 3 membrane-spanning stretches (helical) occupy residues 20–39, 68–88, and 129–149; these read LMRL…WYFF, PISH…LGIC, and VMLL…LTLV. The residue at position 187 (T187) is an FMN phosphoryl threonine. 4 helical membrane-spanning segments follow: residues 215-235, 238-258, 267-287, and 300-320; these read LALG…FLIS, AIAW…SFIG, ASTM…FILT, and IIVG…GGYP.

Belongs to the NqrB/RnfD family. The complex is composed of six subunits: RnfA, RnfB, RnfC, RnfD, RnfE and RnfG. The cofactor is FMN.

Its subcellular location is the cell inner membrane. Its function is as follows. Part of a membrane-bound complex that couples electron transfer with translocation of ions across the membrane. This chain is Ion-translocating oxidoreductase complex subunit D, found in Colwellia psychrerythraea (strain 34H / ATCC BAA-681) (Vibrio psychroerythus).